The chain runs to 202 residues: Protein cuti-1 (202 aa).

Residues 1–37 (MPNDRVAPLPPNFVYSPHDKFYYAPATCNSMHYTTAS) lie on the Cytoplasmic side of the membrane. A helical membrane pass occupies residues 38–58 (YISAFIEFLVMGTGAICFYVM). The Extracellular portion of the chain corresponds to 59–68 (SHKSDSIGKW). A helical membrane pass occupies residues 69 to 89 (LFYIQAGITVLSLLTSALMAF). Residues 90–107 (GLWKENPQMLGSKLKFIE) are Cytoplasmic-facing. Residues 108-128 (FIICFLLIWAVISIVCMAFGI) traverse the membrane as a helical segment. Over 129–148 (QFTRQVFGIFGKVHRIEQDY) the chain is Extracellular. The helical transmembrane segment at 149–169 (GPIWPFNIAVVSFFTAAIAIW) threads the bilayer. Residues 170–202 (TRIIIQGAADYLYDKAYFADKQNVELRESSKTR) lie on the Cytoplasmic side of the membrane.

In terms of assembly, interacts with vps-39.

The protein localises to the cell membrane. Its subcellular location is the cytoplasm. Involved in cuticle formation and ensures cuticle shedding during larval development. Plays a role in maintaining the hypodermis. In association with vps-39, may play a role in vesicle tethering. This is Protein cuti-1 from Caenorhabditis elegans.